Here is a 518-residue protein sequence, read N- to C-terminus: Zinc finger protein 449 (518 aa).

Residues 30 to 112 (RQRFRQFQYR…SLIEDLQREL (83 aa)) form the SCAN box domain. The span at 292 to 304 (NPTLGETPENSNL) shows a compositional bias: polar residues. Residues 292–325 (NPTLGETPENSNLEEPLNPKPHKKKSPGEKPHRC) are disordered. 7 C2H2-type zinc fingers span residues 323–345 (HRCPQCGKCFARKSQLTGHQRIH), 351–373 (HKCPECGKRFLRSSDLYRHQRLH), 379–401 (YECTVCKKRFTRRSHLIGHQRTH), 407–429 (YKCLECGKSFCHGSSLKRHLKTH), 435–457 (HRCHNCGKSFSRLTALTLHQRTH), 463–485 (FKCNYCGKSFRQRPSLVIHLRIH), and 491–513 (YKCTHCSKSFRQRAGLIMHQVTH).

It belongs to the krueppel C2H2-type zinc-finger protein family.

Its subcellular location is the nucleus. Functionally, may be involved in transcriptional regulation. The chain is Zinc finger protein 449 (ZNF449) from Pan troglodytes (Chimpanzee).